Consider the following 364-residue polypeptide: Alanine racemase (364 aa).

Lysine 39 serves as the catalytic Proton acceptor; specific for D-alanine. Lysine 39 bears the N6-(pyridoxal phosphate)lysine mark. Arginine 137 is a binding site for substrate. Tyrosine 258 serves as the catalytic Proton acceptor; specific for L-alanine. Methionine 306 contacts substrate.

This sequence belongs to the alanine racemase family. It depends on pyridoxal 5'-phosphate as a cofactor.

It catalyses the reaction L-alanine = D-alanine. The protein operates within amino-acid biosynthesis; D-alanine biosynthesis; D-alanine from L-alanine: step 1/1. Its function is as follows. Catalyzes the interconversion of L-alanine and D-alanine. May also act on other amino acids. The protein is Alanine racemase (alr) of Methylobacterium sp. (strain 4-46).